Consider the following 507-residue polypeptide: MQEKIIILDFGSQTTQLIGRRVRELDTYCEIVPYNKFPKGDETVKGVILSGSPFSVYDESAFKVDLSEIRGKYPILGICYGAQFMAYTNGGKVEPAGTREYGRAHLTSFCKDNVLFKGVREGTQVWMSHGDTITAIPENFKTIASTDKVAIAAYQVEGEQVWGVQFHPEVFHSEDGTQMLRNFVVDVCGCKQDWSPASFIESTVAELKAQLGDDKVVLGLSGGVDSSVAAVLLNRAIGKNLTCIFVDHGMLRKNEFKNVMHDYECLGLNVIGVDASEKFFSELEGVTEPERKRKIIGKGFIDVFDEEAHKLKDVKWLAQGTIYPDCIESLSITGTVIKSHHNVGGLPEKMNLKLCEPLRLLFKDEVRRVGRELGMPEHLITRHPFPGPGLAVRILGDITPEKVRILQDADDIFIQGLRDWGLYDQVWQAGVILLPVQSVGVMGDERTYERAVALRAVTSTDAMTADWAHLPYEFLGKVSNDIINKVKGVNRVTYDISSKPPATIEWE.

The Glutamine amidotransferase type-1 domain maps to lysine 4–aspartate 193. The Nucleophile role is filled by cysteine 79. Residues histidine 167 and glutamate 169 contribute to the active site. One can recognise a GMPS ATP-PPase domain in the interval tryptophan 194–arginine 382. Serine 221–serine 227 provides a ligand contact to ATP.

As to quaternary structure, homodimer.

The catalysed reaction is XMP + L-glutamine + ATP + H2O = GMP + L-glutamate + AMP + diphosphate + 2 H(+). Its pathway is purine metabolism; GMP biosynthesis; GMP from XMP (L-Gln route): step 1/1. Catalyzes the synthesis of GMP from XMP. This is GMP synthase [glutamine-hydrolyzing] from Bacteroides fragilis (strain ATCC 25285 / DSM 2151 / CCUG 4856 / JCM 11019 / LMG 10263 / NCTC 9343 / Onslow / VPI 2553 / EN-2).